The following is a 1139-amino-acid chain: Ras GTPase-activating protein nGAP (1139 aa).

A disordered region spans residues 1-87 (MQTPEVPAER…SRGLPKLKES (87 aa)). Phosphoserine is present on S16. Residues 17 to 36 (ISGTSTSEKPNSMDTANTSP) show a composition bias toward polar residues. Residues 41-158 (GFFSKRLKGS…WMENLRRTVQ (118 aa)) form the PH domain. Over residues 45-56 (KRLKGSIKRTKS) the composition is skewed to basic residues. The span at 73–87 (STDDRSRGLPKLKES) shows a compositional bias: basic and acidic residues. S89 is modified (phosphoserine). The 119-residue stretch at 149–267 (WMENLRRTVQ…TGRQFVEKWY (119 aa)) folds into the C2 domain. A Ras-GAP domain is found at 343-551 (GRAKDFLTDL…GGMKRFLLEI (209 aa)). Phosphothreonine is present on T620. S663 carries the post-translational modification Phosphoserine. 5 disordered regions span residues 684–704 (ASSQSMTYSEKDERESSLPNG), 751–782 (ETQSTPQSAPQVRRPLHPALNQPGGLQPLSFQ), 803–869 (SLEN…GQAQ), 910–953 (EPVQ…SATM), and 1116–1139 (NGISPTNPTKLSITENGEFKNSSC). Polar residues-rich tracts occupy residues 751-760 (ETQSTPQSAP) and 803-818 (SLENLSTASSRSQSNS). Residues 833 to 855 (DFTKRSTQSEDFSRRHTVPDRHI) show a composition bias toward basic and acidic residues. The residue at position 864 (S864) is a Phosphoserine. Residues 916–928 (SRSRQQSSSSRES) show a composition bias toward low complexity.

In terms of assembly, interacts with PEAK1.

In terms of biological role, inhibitory regulator of the Ras-cyclic AMP pathway. The chain is Ras GTPase-activating protein nGAP (RASAL2) from Homo sapiens (Human).